The primary structure comprises 59 residues: Large ribosomal subunit protein bL32 (59 aa).

Basic residues predominate over residues 1 to 19 (MPVPKRRMSRSNTRSRRAQ). A disordered region spans residues 1 to 20 (MPVPKRRMSRSNTRSRRAQW).

Belongs to the bacterial ribosomal protein bL32 family.

This Acidothermus cellulolyticus (strain ATCC 43068 / DSM 8971 / 11B) protein is Large ribosomal subunit protein bL32.